The sequence spans 121 residues: Holo-[acyl-carrier-protein] synthase (121 aa).

Mg(2+) is bound by residues Asp8 and Glu58.

Belongs to the P-Pant transferase superfamily. AcpS family. In terms of assembly, homotrimer. Mg(2+) serves as cofactor.

Its subcellular location is the cytoplasm. The catalysed reaction is apo-[ACP] + CoA = holo-[ACP] + adenosine 3',5'-bisphosphate + H(+). In terms of biological role, transfers the 4'-phosphopantetheine moiety from coenzyme A to a Ser of fatty acid acyl-carrier-protein ACP. Also modifies the D-alanyl carrier protein but fails to recognize PCP and AcpK, an acyl carrier protein of secondary metabolism. The protein is Holo-[acyl-carrier-protein] synthase of Bacillus subtilis (strain 168).